The primary structure comprises 1062 residues: Carbamoyl phosphate synthase pyrimidine-specific large chain (1062 aa).

The tract at residues 1 to 401 is carboxyphosphate synthetic domain; the sequence is MGKREDIKKI…SLLKAVRSLE (401 aa). Arginine 129, arginine 169, glycine 175, glycine 176, lysine 208, isoleucine 210, glutamate 215, glycine 241, valine 242, histidine 243, glutamine 284, and glutamate 298 together coordinate ATP. An ATP-grasp 1 domain is found at 133-327; sequence RALMKELNEP…IAKIAAKIAV (195 aa). 3 residues coordinate Mg(2+): glutamine 284, glutamate 298, and asparagine 300. Mn(2+) is bound by residues glutamine 284, glutamate 298, and asparagine 300. Residues 402 to 546 form an oligomerization domain region; the sequence is AGVYHLDQPD…YGTYEEENES (145 aa). Residues 547-929 are carbamoyl phosphate synthetic domain; it reads ERTDKKSILV…ALYKGLIASG (383 aa). The ATP-grasp 2 domain occupies 671-861; the sequence is EQTLVELNIP…MANVATKVML (191 aa). ATP-binding residues include arginine 707, arginine 746, leucine 748, glutamate 752, glycine 777, valine 778, histidine 779, serine 780, glutamine 820, and glutamate 832. Residues glutamine 820, glutamate 832, and asparagine 834 each contribute to the Mg(2+) site. Mn(2+) is bound by residues glutamine 820, glutamate 832, and asparagine 834. The MGS-like domain occupies 930–1062; the sequence is MSIPTHGSVL…FSAESMPVMQ (133 aa). The tract at residues 930 to 1062 is allosteric domain; that stretch reads MSIPTHGSVL…FSAESMPVMQ (133 aa).

Belongs to the CarB family. In terms of assembly, composed of two chains; the small (or glutamine) chain promotes the hydrolysis of glutamine to ammonia, which is used by the large (or ammonia) chain to synthesize carbamoyl phosphate. Tetramer of heterodimers (alpha,beta)4. The cofactor is Mg(2+). Mn(2+) is required as a cofactor.

It carries out the reaction hydrogencarbonate + L-glutamine + 2 ATP + H2O = carbamoyl phosphate + L-glutamate + 2 ADP + phosphate + 2 H(+). It catalyses the reaction hydrogencarbonate + NH4(+) + 2 ATP = carbamoyl phosphate + 2 ADP + phosphate + 2 H(+). It functions in the pathway amino-acid biosynthesis; L-arginine biosynthesis; carbamoyl phosphate from bicarbonate: step 1/1. The protein operates within pyrimidine metabolism; UMP biosynthesis via de novo pathway; (S)-dihydroorotate from bicarbonate: step 1/3. Small subunit of the glutamine-dependent carbamoyl phosphate synthetase (CPSase). CPSase catalyzes the formation of carbamoyl phosphate from the ammonia moiety of glutamine, carbonate, and phosphate donated by ATP, constituting the first step of the biosynthetic pathway leading to pyrimidine nucleotides. The large subunit (synthetase) binds the substrates ammonia (free or transferred from glutamine from the small subunit), hydrogencarbonate and ATP and carries out an ATP-coupled ligase reaction, activating hydrogencarbonate by forming carboxy phosphate which reacts with ammonia to form carbamoyl phosphate. This chain is Carbamoyl phosphate synthase pyrimidine-specific large chain (pyrAB), found in Halalkalibacterium halodurans (strain ATCC BAA-125 / DSM 18197 / FERM 7344 / JCM 9153 / C-125) (Bacillus halodurans).